A 488-amino-acid chain; its full sequence is MRVTVTAGDPLSTATDLLVLGLWEEESLPSPLDDLIEPGDWSGKAKQTLLIYPRGALPARRVLLIGLGKRSAPDLDQMREVAAIATQRARELKVDRFAFVIPVLSEQTPETVAAAITEGSLLGSYRFLEYKSDLKPEDRREVDELTLLAPVDAVDEAARGIARGGAVARGVNLARDLANLPPNDLTPARLAERARELAVAFDLPITVLGPAEMREQGFGGILAVGQGSVNEPRFIVIDYGAQYADAPTICLAGKGMTFDSGGISIKPAENMDAMKMDMSGAAAVLGALHAIAELRLPLHVVALIGAAENMPGGSAYRPGDILKTLSGKMIEVLNTDAEGRIVLADVLTYAQRYHPSAIIDLATLTGAISVALGPHAIGLFANDDALAQRLVRAGEAAGERAWQLPLWQPYREMVKSEIADVRNATGRQAGAITAAAFLNAFVGDYPWAHLDIAGTAWTDSKPKAYQPKGATGVGVRLLLQALRDWTQA.

Residues K254 and D259 each contribute to the Mn(2+) site. K266 is a catalytic residue. Mn(2+) contacts are provided by D277, D336, and E338. R340 is an active-site residue.

It belongs to the peptidase M17 family. It depends on Mn(2+) as a cofactor.

It is found in the cytoplasm. The catalysed reaction is Release of an N-terminal amino acid, Xaa-|-Yaa-, in which Xaa is preferably Leu, but may be other amino acids including Pro although not Arg or Lys, and Yaa may be Pro. Amino acid amides and methyl esters are also readily hydrolyzed, but rates on arylamides are exceedingly low.. The enzyme catalyses Release of an N-terminal amino acid, preferentially leucine, but not glutamic or aspartic acids.. Presumably involved in the processing and regular turnover of intracellular proteins. Catalyzes the removal of unsubstituted N-terminal amino acids from various peptides. This chain is Probable cytosol aminopeptidase, found in Roseiflexus castenholzii (strain DSM 13941 / HLO8).